The chain runs to 534 residues: Peptide chain release factor 3 (534 aa).

The tr-type G domain occupies 9-278; it reads ARRRTFAIIS…FFIEHAPPPQ (270 aa). Residues 18–25, 86–90, and 140–143 each bind GTP; these read SHPDAGKT, DTPGH, and NKLD.

This sequence belongs to the TRAFAC class translation factor GTPase superfamily. Classic translation factor GTPase family. PrfC subfamily.

It localises to the cytoplasm. In terms of biological role, increases the formation of ribosomal termination complexes and stimulates activities of RF-1 and RF-2. It binds guanine nucleotides and has strong preference for UGA stop codons. It may interact directly with the ribosome. The stimulation of RF-1 and RF-2 is significantly reduced by GTP and GDP, but not by GMP. This is Peptide chain release factor 3 from Xanthomonas oryzae pv. oryzae (strain MAFF 311018).